A 55-amino-acid chain; its full sequence is Large ribosomal subunit protein bL32 (55 aa).

Basic residues predominate over residues 1 to 19 (MAVPKFKKSRANTRARRSQ). Positions 1-22 (MAVPKFKKSRANTRARRSQWKA) are disordered.

It belongs to the bacterial ribosomal protein bL32 family.

The sequence is that of Large ribosomal subunit protein bL32 from Corynebacterium urealyticum (strain ATCC 43042 / DSM 7109).